The chain runs to 122 residues: Small ribosomal subunit protein uS13 (122 aa).

The interval 98–122 (VRGQRTHTNARTRKGPAKAIAGKKK) is disordered.

This sequence belongs to the universal ribosomal protein uS13 family. Part of the 30S ribosomal subunit. Forms a loose heterodimer with protein S19. Forms two bridges to the 50S subunit in the 70S ribosome.

Located at the top of the head of the 30S subunit, it contacts several helices of the 16S rRNA. In the 70S ribosome it contacts the 23S rRNA (bridge B1a) and protein L5 of the 50S subunit (bridge B1b), connecting the 2 subunits; these bridges are implicated in subunit movement. Contacts the tRNAs in the A and P-sites. The polypeptide is Small ribosomal subunit protein uS13 (Ruegeria pomeroyi (strain ATCC 700808 / DSM 15171 / DSS-3) (Silicibacter pomeroyi)).